Reading from the N-terminus, the 356-residue chain is ADP-ribosylhydrolase ARH3 (356 aa).

Residues Asp-26, Glu-33, Thr-62, Asp-63, and Asp-64 each contribute to the Mg(2+) site. Residue Asp-63 coordinates substrate. Substrate-binding positions include 132–138 (KGSYGNG), His-168, and Ile-260. Mg(2+)-binding residues include Asp-303, Asp-305, and Thr-306.

This sequence belongs to the ADP-ribosylglycohydrolase family. Monomer. It depends on Mg(2+) as a cofactor. Mn(2+) serves as cofactor.

The protein resides in the nucleus. It localises to the cytoplasm. The protein localises to the chromosome. Its subcellular location is the mitochondrion matrix. The enzyme catalyses [(1''-&gt;2')-ADP-alpha-D-ribose](n) + H2O = [(1''-&gt;2')-ADP-alpha-D-ribose](n-1) + ADP-D-ribose. It catalyses the reaction 1''-O-acetyl-ADP-alpha-D-ribose + H2O = ADP-D-ribose + acetate + H(+). It carries out the reaction O-(ADP-D-ribosyl)-L-seryl-[protein] + H2O = ADP-D-ribose + L-seryl-[protein]. The catalysed reaction is alpha-NAD(+) + H2O = ADP-D-ribose + nicotinamide + H(+). With respect to regulation, the protein undergoes a dramatic conformational switch from closed to open states upon substrate-binding, which enables specific substrate recognition for the 1''-O-linkage. The glutamate flap (Glu-33) blocks substrate entrance to Mg(2+) in the unliganded closed state. In presence of substrate, Glu-33 is ejected from the active site: this closed-to-open transition significantly widens the substrate-binding channel and precisely positions the scissile 1''-O-linkage for cleavage while securing tightly 2'- and 3'-hydroxyls of ADP-ribose. Activity is inhibited by calcium. In terms of biological role, ADP-ribosylhydrolase that preferentially hydrolyzes the scissile alpha-O-linkage attached to the anomeric C1'' position of ADP-ribose and acts on different substrates, such as proteins ADP-ribosylated on serine and threonine, free poly(ADP-ribose) and O-acetyl-ADP-D-ribose. Specifically acts as a serine mono-ADP-ribosylhydrolase by mediating the removal of mono-ADP-ribose attached to serine residues on proteins, thereby playing a key role in DNA damage response. Serine ADP-ribosylation of proteins constitutes the primary form of ADP-ribosylation of proteins in response to DNA damage. Does not hydrolyze ADP-ribosyl-arginine, -cysteine, -diphthamide, or -asparagine bonds. Also able to degrade protein free poly(ADP-ribose), which is synthesized in response to DNA damage: free poly(ADP-ribose) acts as a potent cell death signal and its degradation by ADPRHL2 protects cells from poly(ADP-ribose)-dependent cell death, a process named parthanatos. Also hydrolyzes free poly(ADP-ribose) in mitochondria. Specifically digests O-acetyl-ADP-D-ribose, a product of deacetylation reactions catalyzed by sirtuins. Specifically degrades 1''-O-acetyl-ADP-D-ribose isomer, rather than 2''-O-acetyl-ADP-D-ribose or 3''-O-acetyl-ADP-D-ribose isomers. The sequence is that of ADP-ribosylhydrolase ARH3 (adprs) from Latimeria chalumnae (Coelacanth).